The primary structure comprises 105 residues: Resistin-like beta (105 aa).

Positions 1-23 (MKPTLCFLFILVSLFPLIVPGNA) are cleaved as a signal peptide. 5 disulfides stabilise this stretch: C49-C102, C61-C101, C70-C87, C72-C89, and C76-C91.

Belongs to the resistin/FIZZ family. As to quaternary structure, homodimer; disulfide-linked. Heterodimer with RETNLG. In terms of tissue distribution, strongly expressed in colon, and at lower levels in ileum. In colon, found throughout the crypt and surface epithelium and in goblet cells (at protein level). Specific to the gastrointestinal tract; not detected in other tissues tested.

The protein resides in the secreted. Functionally, probable hormone. The sequence is that of Resistin-like beta (Retnlb) from Mus musculus (Mouse).